The chain runs to 249 residues: Type-1Aa cytolytic delta-endotoxin (249 aa).

It belongs to the cyt1/cyt2 endotoxin family. Active after proteolytic processing.

Kills the larvae of dipteran insects by making pores in the epithelial cell membrane of the insect midgut. Acts on mosquitos and black flies. The sequence is that of Type-1Aa cytolytic delta-endotoxin (cyt1Aa) from Bacillus thuringiensis subsp. morrisoni.